The chain runs to 458 residues: Phosphoglucosamine mutase (458 aa).

The active-site Phosphoserine intermediate is the serine 108. 4 residues coordinate Mg(2+): serine 108, aspartate 247, aspartate 249, and aspartate 251. Serine 108 bears the Phosphoserine mark.

This sequence belongs to the phosphohexose mutase family. Mg(2+) serves as cofactor. Activated by phosphorylation.

The catalysed reaction is alpha-D-glucosamine 1-phosphate = D-glucosamine 6-phosphate. In terms of biological role, catalyzes the conversion of glucosamine-6-phosphate to glucosamine-1-phosphate. This chain is Phosphoglucosamine mutase, found in Nitrosomonas europaea (strain ATCC 19718 / CIP 103999 / KCTC 2705 / NBRC 14298).